The chain runs to 518 residues: Cytochrome P450 monooxygenase COX1 (518 aa).

The chain crosses the membrane as a helical span at residues 7–25 (VLIALSSIVVAYFVKTALA). N-linked (GlcNAc...) asparagine glycans are attached at residues N48, N100, N292, N302, and N351. C450 serves as a coordination point for heme. N457 carries an N-linked (GlcNAc...) asparagine glycan.

This sequence belongs to the cytochrome P450 family. Heme serves as cofactor.

It localises to the membrane. It functions in the pathway secondary metabolite biosynthesis. Functionally, cytochrome P450 monooxygenase; part of the gene cluster that mediates the biosynthesis of alpha-cuprenene and oxidized derivatives. The alpha-cuprenene synthase COP6 is the only sesquiterpene synthase identified in C.cinereus that appears to be part of a biosynthetic gene cluster and is highly specific since it catalyzes the cyclization of (2E,6E)-farnesyl diphosphate into only one product, alpha-cuprenene. The cytochrome P450 monooxygenase COX2 then oxidizes the cyclohexadiene ring of alpha-cuprenene at positions 1 and 4, yielding first alpha-cuparene, followed by alpha-cuparophenol and a further yet unidentified compound resulting from one additional oxidation step. The cytochrome P450 monooxygenase COX1 then likely catalyzes the oxidation at position 9 of the pentane ring of alpha-cuprenene to give the corresponding hydroxy or ketone derivatives. In Coprinopsis cinerea (strain Okayama-7 / 130 / ATCC MYA-4618 / FGSC 9003) (Inky cap fungus), this protein is Cytochrome P450 monooxygenase COX1.